The following is a 599-amino-acid chain: Beta-(1--&gt;2)glucan export ATP-binding/permease protein NdvA (599 aa).

Residues 21–301 form the ABC transmembrane type-1 domain; sequence TITMCVASVL…ISAFINQTVT (281 aa). The next 5 membrane-spanning stretches (helical) occupy residues 22-42, 55-75, 156-176, 248-268, and 276-296; these read ITMC…PVLF, IFSP…AAVF, MRMS…GQLV, MAST…VTKG, and IAFI…SAFI. In terms of domain architecture, ABC transporter spans 335–569; it reads IVFDNVTYEF…GGRFSDLLRA (235 aa). Position 368–375 (368–375) interacts with ATP; the sequence is GPTGAGKT.

Belongs to the ABC transporter superfamily. Beta-(1--&gt;2)glucan exporter (TC 3.A.1.108.1) family. In terms of assembly, homodimer.

The protein localises to the cell inner membrane. The catalysed reaction is [(1-&gt;2)-beta-D-glucosyl](n)(in) + ATP + H2O = [(1-&gt;2)-beta-D-glucosyl](n)(out) + ADP + phosphate + H(+). In terms of biological role, involved in beta-(1--&gt;2)glucan export. Transmembrane domains (TMD) form a pore in the inner membrane and the ATP-binding domain (NBD) is responsible for energy generation. In Brucella melitensis biotype 1 (strain ATCC 23456 / CCUG 17765 / NCTC 10094 / 16M), this protein is Beta-(1--&gt;2)glucan export ATP-binding/permease protein NdvA.